Consider the following 84-residue polypeptide: Putative membrane protein insertion efficiency factor (84 aa).

Residues 63 to 84 are disordered; it reads WGGSGYDPVPGADPEHDRRPRG. Basic and acidic residues predominate over residues 75–84; that stretch reads DPEHDRRPRG.

This sequence belongs to the UPF0161 family.

The protein resides in the cell inner membrane. Functionally, could be involved in insertion of integral membrane proteins into the membrane. The chain is Putative membrane protein insertion efficiency factor from Cereibacter sphaeroides (strain ATCC 17025 / ATH 2.4.3) (Rhodobacter sphaeroides).